The chain runs to 195 residues: dTTP/UTP pyrophosphatase (195 aa).

D70 functions as the Proton acceptor in the catalytic mechanism.

Belongs to the Maf family. YhdE subfamily. A divalent metal cation serves as cofactor.

The protein resides in the cytoplasm. The catalysed reaction is dTTP + H2O = dTMP + diphosphate + H(+). It carries out the reaction UTP + H2O = UMP + diphosphate + H(+). Functionally, nucleoside triphosphate pyrophosphatase that hydrolyzes dTTP and UTP. May have a dual role in cell division arrest and in preventing the incorporation of modified nucleotides into cellular nucleic acids. In Photorhabdus laumondii subsp. laumondii (strain DSM 15139 / CIP 105565 / TT01) (Photorhabdus luminescens subsp. laumondii), this protein is dTTP/UTP pyrophosphatase.